The chain runs to 112 residues: Large ribosomal subunit protein bL17 (112 aa).

This sequence belongs to the bacterial ribosomal protein bL17 family. Part of the 50S ribosomal subunit. Contacts protein L32.

This Caldanaerobacter subterraneus subsp. tengcongensis (strain DSM 15242 / JCM 11007 / NBRC 100824 / MB4) (Thermoanaerobacter tengcongensis) protein is Large ribosomal subunit protein bL17.